The following is a 456-amino-acid chain: MLPSQSPAIFTVSRLNQTVRLLLEHEMGQVWISGEISNFTQPASGHWYFTLKDDTAQVRCAMFRNSNRRVTFRPQHGQQVLVRANITLYEPRGDYQIIVESMQPAGEGLLQQKYEQLKAKLQAECLFDQQYKKPLPSPAHCVGVITSKTGAALHDILHVLKRRDPSLPVIIYPTSVQGDDAPGQIVRAIELANQRNECDVLIVGRGGGSLEDLWSFNDERVARAIFASRIPVVSAVGHETDVTIADFVADLRAPTPSAAAEVVSRNQQELLRQVQSTRQRLEMAMDYYLANRTRRFTQIHHRLQQQHPQLRLARQQTMLERLQKRMSFALENQLKRTGQQQQRLTQRLNQQNPQPKIHRAQTRIQQLEYRLAETLRVQLSATRERFGNAVTHLEAVSPLSTLARGYSVTTATDGNVLKKVKQVKAGEMLTTRLEDGWIESEVKNIQPVKKSRKKVH.

Belongs to the XseA family. In terms of assembly, heterooligomer composed of large and small subunits.

It is found in the cytoplasm. It carries out the reaction Exonucleolytic cleavage in either 5'- to 3'- or 3'- to 5'-direction to yield nucleoside 5'-phosphates.. In terms of biological role, bidirectionally degrades single-stranded DNA into large acid-insoluble oligonucleotides, which are then degraded further into small acid-soluble oligonucleotides. The polypeptide is Exodeoxyribonuclease 7 large subunit (Shigella boydii serotype 4 (strain Sb227)).